Reading from the N-terminus, the 146-residue chain is UPF0742 protein SPAC977.02 (146 aa).

A helical membrane pass occupies residues Leu-38–Ser-60.

Belongs to the UPF0742 family.

Its subcellular location is the cytoplasm. It is found in the nucleus membrane. In Schizosaccharomyces pombe (strain 972 / ATCC 24843) (Fission yeast), this protein is UPF0742 protein SPAC977.02.